The chain runs to 148 residues: uncharacterized protein (148 aa).

Positions 1–19 (MLSNAKLLLSLAMASTALG) are cleaved as a signal peptide. N-linked (GlcNAc...) asparagine glycosylation is found at Asn-41 and Asn-59. Asn-127 is lipidated: GPI-anchor amidated asparagine. Residues 128 to 148 (AANARAIPGALGLAGAVMMLL) constitute a propeptide, removed in mature form.

It belongs to the SED1 family. Post-translationally, the GPI-anchor is attached to the protein in the endoplasmic reticulum and serves to target the protein to the cell surface. There, the glucosamine-inositol phospholipid moiety is cleaved off and the GPI-modified mannoprotein is covalently attached via its lipidless GPI glycan remnant to the 1,6-beta-glucan of the outer cell wall layer.

It is found in the secreted. The protein localises to the cell wall. The protein resides in the membrane. Its function is as follows. Cell wall protein that plays a role in adaptation and resistance to cell wall stress. This is an uncharacterized protein from Saccharomyces cerevisiae (strain ATCC 204508 / S288c) (Baker's yeast).